The sequence spans 454 residues: uncharacterized protein (454 aa).

This is an uncharacterized protein from Rickettsia prowazekii (strain Madrid E).